The sequence spans 349 residues: Selenide, water dikinase (349 aa).

The active site involves C17. ATP is bound by residues K20 and 48–50 (MAD). D51 serves as a coordination point for Mg(2+). ATP is bound by residues D68, D91, and 139–141 (GHS). D91 is a binding site for Mg(2+). D227 provides a ligand contact to Mg(2+).

This sequence belongs to the selenophosphate synthase 1 family. Class I subfamily. Homodimer. Mg(2+) is required as a cofactor.

The catalysed reaction is hydrogenselenide + ATP + H2O = selenophosphate + AMP + phosphate + 2 H(+). Synthesizes selenophosphate from selenide and ATP. This Rhizobium meliloti (strain 1021) (Ensifer meliloti) protein is Selenide, water dikinase.